Consider the following 360-residue polypeptide: Decorin (360 aa).

Residues 1 to 16 (MTATLILLLLAQVSWA) form the signal peptide. The propeptide occupies 17-30 (GPFQQRGLFDFMLE). Ser34 carries an O-linked (Xyl...) (glycosaminoglycan) serine glycan. Intrachain disulfides connect Cys55/Cys61 and Cys59/Cys68. 12 LRR repeats span residues 74 to 94 (DKVP…NNKI), 95 to 118 (TEIK…NNKI), 119 to 142 (SKIS…KNHL), 143 to 163 (KELP…ENEI), 164 to 187 (TKVR…TNPL), 188 to 213 (KSSG…DTNI), 214 to 234 (TTIP…GNKI), 235 to 258 (TKID…FNDI), 259 to 282 (SAVD…NNKL), 283 to 305 (IRVP…NNNI), 306 to 335 (SVVG…SNPV), and 336 to 360 (QYWE…GNYK). N-linked (GlcNAc...) asparagine glycosylation occurs at Asn212. Asn263 and Asn304 each carry an N-linked (GlcNAc...) asparagine glycan. A disulfide bridge connects residues Cys314 and Cys347.

The protein belongs to the small leucine-rich proteoglycan (SLRP) family. SLRP class I subfamily. In terms of assembly, binds to type I and type II collagen, fibronectin and TGF-beta. Forms a ternary complex with MFAP2 and ELN. Interacts with DPT. In terms of processing, the attached glycosaminoglycan chain can be either chondroitin sulfate or dermatan sulfate depending upon the tissue of origin.

It localises to the secreted. The protein localises to the extracellular space. It is found in the extracellular matrix. Its function is as follows. May affect the rate of fibrils formation. The protein is Decorin (DCN) of Oryctolagus cuniculus (Rabbit).